The primary structure comprises 844 residues: Saxiphilin (844 aa).

The first 19 residues, 1 to 19 (MAPTFQTALFFTIISLSFA), serve as a signal peptide directing secretion. The region spanning 26–106 (VRWCAISDLE…IAEPYSSNRD (81 aa)) is the Transferrin-like 1; first part domain. 19 disulfide bridges follow: Cys29–Cys64, Cys39–Cys55, Cys110–Cys130, Cys141–Cys148, Cys150–Cys172, Cys180–Cys202, Cys222–Cys244, Cys277–Cys360, Cys322–Cys335, Cys332–Cys343, Cys388–Cys402, Cys495–Cys527, Cys505–Cys518, Cys552–Cys839, Cys570–Cys799, Cys607–Cys685, Cys641–Cys655, Cys652–Cys668, and Cys725–Cys739. Thyroglobulin type-1 domains are found at residues 107-172 (LQKC…RATC) and 177-244 (LPKC…PATC). Residues 109–249 (KCLKERQQAL…IPATCQKHDL (141 aa)) form an absent in transferrins region. One can recognise a Transferrin-like 1; second part domain in the interval 245–482 (QKHDLVTTCH…LFHAMKALTG (238 aa)). The region spanning 492-828 (VRWCTINKLE…YYTTVYGASR (337 aa)) is the Transferrin-like 2 domain.

It belongs to the transferrin family. In terms of assembly, monomer. In terms of tissue distribution, plasma. Highest levels of transcripts found in the liver, the lung, the pancreas and the brain.

The protein resides in the secreted. Functionally, binds specifically to the neurotoxin saxitoxin. Its physiological role may be to transport or sequester an endogenous organic molecule other than Fe(3+). It may participate in a detoxification mechanism for neutralizing a microbial toxin. This chain is Saxiphilin, found in Aquarana catesbeiana (American bullfrog).